A 147-amino-acid polypeptide reads, in one-letter code: Large ribosomal subunit protein bL9 (147 aa).

This sequence belongs to the bacterial ribosomal protein bL9 family.

Its function is as follows. Binds to the 23S rRNA. This chain is Large ribosomal subunit protein bL9, found in Campylobacter jejuni subsp. jejuni serotype O:23/36 (strain 81-176).